The chain runs to 160 residues: Sulfur-rich protein (160 aa).

2 helical membrane passes run isoleucine 63–leucine 83 and phenylalanine 92–methionine 112.

It localises to the membrane. This Chlamydia abortus (strain DSM 27085 / S26/3) (Chlamydophila abortus) protein is Sulfur-rich protein (srp).